The following is a 233-amino-acid chain: tRNA (guanine-N(7)-)-methyltransferase (233 aa).

Residues Met1–Ser36 are disordered. S-adenosyl-L-methionine contacts are provided by Glu68, Glu93, Asp120, and Asp142. Asp142 is an active-site residue. Residues Lys146, Asp178, and Thr211–Glu214 contribute to the substrate site.

The protein belongs to the class I-like SAM-binding methyltransferase superfamily. TrmB family.

It catalyses the reaction guanosine(46) in tRNA + S-adenosyl-L-methionine = N(7)-methylguanosine(46) in tRNA + S-adenosyl-L-homocysteine. It functions in the pathway tRNA modification; N(7)-methylguanine-tRNA biosynthesis. Its function is as follows. Catalyzes the formation of N(7)-methylguanine at position 46 (m7G46) in tRNA. This is tRNA (guanine-N(7)-)-methyltransferase from Paracoccus denitrificans (strain Pd 1222).